The sequence spans 216 residues: MTDTIDPDLIERGRKMFAGDWHFIWASPSIETLPPMGSVEIAFAGRSNVGKSSLINALTGRNALARTSHTPGRTQELIFFEGPPNAGLRLVDMPGYGYAAASKAKVASWTSLIHHFLQGRATLARVYVLIDGRHGLKDVDLDILKTLDKAAVSYQIVLTKADQVKAAELAERVTATVAALAKHPAAFPEVLTTSSRTGAGMPELRAAMIRLLDERR.

Residues 37-214 (GSVEIAFAGR…RAAMIRLLDE (178 aa)) enclose the EngB-type G domain. GTP-binding positions include 45-52 (GRSNVGKS), 72-76 (GRTQE), 92-95 (DMPG), 159-162 (TKAD), and 193-195 (TSS). Positions 52 and 74 each coordinate Mg(2+).

This sequence belongs to the TRAFAC class TrmE-Era-EngA-EngB-Septin-like GTPase superfamily. EngB GTPase family. The cofactor is Mg(2+).

Necessary for normal cell division and for the maintenance of normal septation. This chain is Probable GTP-binding protein EngB, found in Rhodopseudomonas palustris (strain TIE-1).